Here is a 734-residue protein sequence, read N- to C-terminus: MSMMTVWALRRNVRRKNHSMLVRYISGSASMKPKEQCIEKILVANRGEIACRIMRTAKRLGIQTVAVYSDADRDSLHVKSADEAVRIGPPSARLSYLSGVTIMEAAARTGAQAIHPGYGFLSESSDFAQLCEDSGLTFIGPPASAIRDMGDKSASKRIMGAAGVPLVPGYHGHEQDIDHMKSEAEKIGYPIIIKPTHGGGGKGMRIVQSGKDFADSFLGAQREAAASFGVNTILLEKYITRPRHIEVQIFGDKHGNVLHLYERDCSVQRRHQKIIEEAPAPNISEKFRANLGQAAVSAARAVGYYNAGTVEFIVDTESDQFYFMEMNTRLQVEHPVTEMIVGQDLVEWQIRVANGEPLPLSQSEVPMSGHAFEARIYAENVPKGFLPATGVLNHYRPVAVSPSVRVETGVEQGDTVSMHYDPMIAKLVVWGGNRGEALVKLKDCLSNFQVAGVPTNINFLQKLASHKEFAVGNVETHFIEHHKSDLFADESNPAATEVAYKAVKHSAALVAACISTIEHSTWNESNHGKVPSIWYSNPPFRVHHEAKQTIELEWNNECEGTGSNLISLGVRYQPDGSYLIEEGNDSPSLELRVTRAGKCDFRVEAAGLSMNVSLAAYLKDGYKHIHIWHGSEHHQFKQKVGIEFSEDEEGVQHRTSSETSSHPPGTIVAPMAGLVVKVLVENEAKVDQGQPILVLEAMKMEHVVKAPSSGSIQDLKVKAGQQVSDGSALFRIKG.

The N-terminal 25 residues, Met1–Ile25, are a transit peptide targeting the mitochondrion. The 448-residue stretch at Cys37–Ser484 folds into the Biotin carboxylation domain. The ATP site is built by Lys152, Glu236, and His271. Residues Lys156–Asn354 enclose the ATP-grasp domain. Positions 311, 325, and 327 each coordinate Mn(2+). Arg329 is an active-site residue. Position 645 is a phosphoserine (Ser645). Positions Ser645–Thr666 are disordered. The Biotinyl-binding domain maps to Ser657–Lys733. Lys699 is subject to N6-biotinyllysine.

As to quaternary structure, probably a heterodimer composed of biotin-containing alpha subunits and beta subunits. It depends on biotin as a cofactor. The cofactor is Mn(2+). As to expression, in roots, cotyledons, leaves, flowers, ovaries, siliques and embryos.

The protein resides in the mitochondrion matrix. It catalyses the reaction 3-methylbut-2-enoyl-CoA + hydrogencarbonate + ATP = 3-methyl-(2E)-glutaconyl-CoA + ADP + phosphate + H(+). It participates in amino-acid degradation; L-leucine degradation; (S)-3-hydroxy-3-methylglutaryl-CoA from 3-isovaleryl-CoA: step 2/3. Its function is as follows. Biotin-attachment subunit of the 3-methylcrotonyl-CoA carboxylase, an enzyme that catalyzes the conversion of 3-methylcrotonyl-CoA to 3-methylglutaconyl-CoA, a critical step for leucine and isovaleric acid catabolism. The sequence is that of Methylcrotonoyl-CoA carboxylase subunit alpha, mitochondrial (MCCA) from Arabidopsis thaliana (Mouse-ear cress).